A 504-amino-acid polypeptide reads, in one-letter code: Anaerobic nitric oxide reductase transcription regulator NorR (504 aa).

D57 carries the 4-aspartylphosphate modification. The Sigma-54 factor interaction domain occupies 187–416 (MIGLSPGMTQ…LEHAIHRAVV (230 aa)). ATP-binding positions include 215-222 (GETGTGKE) and 278-287 (ADNGTLFLDE). A DNA-binding region (H-T-H motif) is located at residues 479-498 (WAACARMLETDVANLHRLAK).

Its pathway is nitrogen metabolism; nitric oxide reduction. In terms of biological role, required for the expression of anaerobic nitric oxide (NO) reductase, acts as a transcriptional activator for at least the norVW operon. Activation also requires sigma-54. This Shigella sonnei (strain Ss046) protein is Anaerobic nitric oxide reductase transcription regulator NorR.